The sequence spans 296 residues: Transmembrane O-methyltransferase (296 aa).

Residues 36–56 traverse the membrane as a helical segment; sequence VGTMSPAIALAFLPLVVTLLV. Residues Glu142, 144-145, Ser150, Glu168, and Ser198 each bind S-adenosyl-L-methionine; that span reads GT.

Belongs to the class I-like SAM-binding methyltransferase superfamily. Cation-dependent O-methyltransferase family. Interacts with LHFPL5, PCDH15, TMC1, TMC2 and TMIE. Interacts directly with TMC1. The interaction of TOMT with TMC1 and TMC2 is required for the transportation of TMC1/2 into the stereocilia of hair cells.

It is found in the membrane. The protein localises to the cytoplasm. It localises to the endoplasmic reticulum. It carries out the reaction a catechol + S-adenosyl-L-methionine = a guaiacol + S-adenosyl-L-homocysteine + H(+). In terms of biological role, catalyzes the O-methylation, and thereby the inactivation, of catecholamine neurotransmitters and catechol hormones. Required for auditory function. Component of the cochlear hair cell's mechanotransduction (MET) machinery. Involved in the assembly of the asymmetric tip-link MET complex. Required for transportation of TMC1 and TMC2 proteins into the mechanically sensitive stereocilia of the hair cells. The function in MET is independent of the enzymatic activity. The chain is Transmembrane O-methyltransferase from Macaca mulatta (Rhesus macaque).